Consider the following 520-residue polypeptide: Ubiquitin carboxyl-terminal hydrolase 3 (520 aa).

Position 1 is an N-acetylmethionine (Met-1). The UBP-type zinc finger occupies 1 to 121 (MECPHLSSSV…QKVREHLQNL (121 aa)). Cys-3, His-5, Cys-29, Cys-32, Cys-41, Cys-44, Cys-49, His-56, His-60, His-82, Cys-95, and Cys-98 together coordinate Zn(2+). Residues 159-511 (TGLRNLGNTC…KAYILFYVEH (353 aa)) form the USP domain. Catalysis depends on Cys-168, which acts as the Nucleophile. His-471 acts as the Proton acceptor in catalysis.

This sequence belongs to the peptidase C19 family. USP3 subfamily. Interacts (via UBP-type domain) with H2A; the interaction is less efficient than with monoubiquitinated H2A. As to expression, expressed in all tissues examined, with strongest expression in pancreas.

It is found in the nucleus. It localises to the cytoplasm. The catalysed reaction is Thiol-dependent hydrolysis of ester, thioester, amide, peptide and isopeptide bonds formed by the C-terminal Gly of ubiquitin (a 76-residue protein attached to proteins as an intracellular targeting signal).. In terms of biological role, deubiquitinase that plays a role in several cellular processes including transcriptional regulation, cell cycle progression or innate immunity. In response to DNA damage, deubiquitinates monoubiquitinated target proteins such as histone H2A and H2AX and thereby counteracts RNF168- and RNF8-mediated ubiquitination. In turn, participates in the recruitment of DNA damage repair factors to DNA break sites. Required for proper progression through S phase and subsequent mitotic entry. Acts as a positive regulator of TP53 by deubiquitinating and stabilizing it to promote normal cell proliferation and transformation. Participates in establishing tolerance innate immune memory through non-transcriptional feedback. Mechanistically, negatively regulates TLR-induced NF-kappa-B signaling by targeting and removing the 'Lys-63'-linked polyubiquitin chains on MYD88. Negatively regulates the activation of type I interferon signaling by mediating 'Lys-63'-linked polyubiquitin chains on RIGI and IFIH1. Also deubiquinates ASC/PYCARD, the central adapter mediating the assembly and activation of most inflammasomes, and thereby promotes inflammasome activation. The sequence is that of Ubiquitin carboxyl-terminal hydrolase 3 (USP3) from Homo sapiens (Human).